Consider the following 411-residue polypeptide: MQKHEYVNPVKLYSAIRDEKFPFILESAEKSGRARYTYISFNPLYTVRVGSRTRVDGEVISKISDPFDALNEIHVKGLLVGYVAYEAVKNYIGKKPQTPSVFGCYDGYFVYDHYLRKLFSVNVENADKIVERAKRVEVEQVRGNSEVLRAGSREKFEKMVERGKEQIFEGEVYQIVLSREYVVDTDLSPFQMYLNLRETNPSPYMFLLEFDRALIGSSPETMGRVEGNSFIINPIAGTARREAGREKEIAEKLLSDEKERAEHVMLVDLARNDVRKVCRAGSVRVSRFMEVVEYPSVLHIESEVVGELKAGVTHFDAMKATFPAGTVTGAPKLRAIELIDEIEGDCRGVYAGAVGYFSENVSDLAIAIRMIEFDGKARIRAGAGIVADSVPEREFFETENKIARVLRAVGL.

Residues Ser-27 and 203–205 contribute to the L-tryptophan site; that span reads PYM. 237 to 238 contributes to the chorismate binding site; it reads GT. A Mg(2+)-binding site is contributed by Glu-262. Chorismate-binding positions include Tyr-350, Arg-369, 382-384, and Gly-384; that span reads GAG. A Mg(2+)-binding site is contributed by Glu-397.

The protein belongs to the anthranilate synthase component I family. As to quaternary structure, heterotetramer consisting of two non-identical subunits: a beta subunit (TrpG) and a large alpha subunit (TrpE). It depends on Mg(2+) as a cofactor.

It carries out the reaction chorismate + L-glutamine = anthranilate + pyruvate + L-glutamate + H(+). The protein operates within amino-acid biosynthesis; L-tryptophan biosynthesis; L-tryptophan from chorismate: step 1/5. With respect to regulation, feedback inhibited by tryptophan. Its function is as follows. Part of a heterotetrameric complex that catalyzes the two-step biosynthesis of anthranilate, an intermediate in the biosynthesis of L-tryptophan. In the first step, the glutamine-binding beta subunit (TrpG) of anthranilate synthase (AS) provides the glutamine amidotransferase activity which generates ammonia as a substrate that, along with chorismate, is used in the second step, catalyzed by the large alpha subunit of AS (TrpE) to produce anthranilate. In the absence of TrpG, TrpE can synthesize anthranilate directly from chorismate and high concentrations of ammonia. The sequence is that of Anthranilate synthase component 1 (trpE) from Archaeoglobus fulgidus (strain ATCC 49558 / DSM 4304 / JCM 9628 / NBRC 100126 / VC-16).